The chain runs to 428 residues: Peptidase B (428 aa).

Mn(2+) contacts are provided by lysine 195 and aspartate 200. Lysine 207 is a catalytic residue. Mn(2+)-binding residues include aspartate 218, aspartate 277, and glutamate 279. Arginine 281 is a catalytic residue.

The protein belongs to the peptidase M17 family. As to quaternary structure, homohexamer. It depends on Mn(2+) as a cofactor.

It is found in the cytoplasm. The catalysed reaction is Release of an N-terminal amino acid, Xaa, from a peptide or arylamide. Xaa is preferably Glu or Asp but may be other amino acids, including Leu, Met, His, Cys and Gln.. In terms of biological role, probably plays an important role in intracellular peptide degradation. The sequence is that of Peptidase B from Klebsiella pneumoniae (strain 342).